The chain runs to 387 residues: 3-ketoacyl-CoA thiolase (387 aa).

Cysteine 91 serves as the catalytic Acyl-thioester intermediate. Active-site proton acceptor residues include histidine 343 and cysteine 373.

Belongs to the thiolase-like superfamily. Thiolase family. Heterotetramer of two alpha chains (FadB) and two beta chains (FadA).

The protein localises to the cytoplasm. It catalyses the reaction an acyl-CoA + acetyl-CoA = a 3-oxoacyl-CoA + CoA. Its pathway is lipid metabolism; fatty acid beta-oxidation. Its function is as follows. Catalyzes the final step of fatty acid oxidation in which acetyl-CoA is released and the CoA ester of a fatty acid two carbons shorter is formed. This Escherichia coli O9:H4 (strain HS) protein is 3-ketoacyl-CoA thiolase.